The sequence spans 182 residues: ATP synthase subunit delta (182 aa).

This sequence belongs to the ATPase delta chain family. In terms of assembly, F-type ATPases have 2 components, F(1) - the catalytic core - and F(0) - the membrane proton channel. F(1) has five subunits: alpha(3), beta(3), gamma(1), delta(1), epsilon(1). CF(0) has four main subunits: a(1), b(1), b'(1) and c(10-14). The alpha and beta chains form an alternating ring which encloses part of the gamma chain. F(1) is attached to F(0) by a central stalk formed by the gamma and epsilon chains, while a peripheral stalk is formed by the delta, b and b' chains.

It is found in the cellular thylakoid membrane. Functionally, f(1)F(0) ATP synthase produces ATP from ADP in the presence of a proton or sodium gradient. F-type ATPases consist of two structural domains, F(1) containing the extramembraneous catalytic core and F(0) containing the membrane proton channel, linked together by a central stalk and a peripheral stalk. During catalysis, ATP synthesis in the catalytic domain of F(1) is coupled via a rotary mechanism of the central stalk subunits to proton translocation. Its function is as follows. This protein is part of the stalk that links CF(0) to CF(1). It either transmits conformational changes from CF(0) to CF(1) or is implicated in proton conduction. The chain is ATP synthase subunit delta from Synechococcus sp. (strain JA-3-3Ab) (Cyanobacteria bacterium Yellowstone A-Prime).